Reading from the N-terminus, the 327-residue chain is GMP reductase (327 aa).

Residue C176 is the Thioimidate intermediate of the active site. Position 205–228 (205–228) interacts with NADP(+); that stretch reads IIADGGIRTHGDIAKSIRFGASMV.

It belongs to the IMPDH/GMPR family. GuaC type 2 subfamily.

It catalyses the reaction IMP + NH4(+) + NADP(+) = GMP + NADPH + 2 H(+). In terms of biological role, catalyzes the irreversible NADPH-dependent deamination of GMP to IMP. It functions in the conversion of nucleobase, nucleoside and nucleotide derivatives of G to A nucleotides, and in maintaining the intracellular balance of A and G nucleotides. This is GMP reductase from Streptococcus agalactiae serotype V (strain ATCC BAA-611 / 2603 V/R).